Reading from the N-terminus, the 195-residue chain is FMN-dependent NADH:quinone oxidoreductase 2 (195 aa).

Residues 16-18 and 85-88 contribute to the FMN site; these read SVS and MWNL.

It belongs to the azoreductase type 1 family. Homodimer. The cofactor is FMN.

The enzyme catalyses 2 a quinone + NADH + H(+) = 2 a 1,4-benzosemiquinone + NAD(+). It carries out the reaction N,N-dimethyl-1,4-phenylenediamine + anthranilate + 2 NAD(+) = 2-(4-dimethylaminophenyl)diazenylbenzoate + 2 NADH + 2 H(+). Functionally, quinone reductase that provides resistance to thiol-specific stress caused by electrophilic quinones. In terms of biological role, also exhibits azoreductase activity. Catalyzes the reductive cleavage of the azo bond in aromatic azo compounds to the corresponding amines. In Photobacterium profundum (strain SS9), this protein is FMN-dependent NADH:quinone oxidoreductase 2.